Consider the following 393-residue polypeptide: L-rhamnonate dehydratase (393 aa).

Residues H22 and R48 each contribute to the substrate site. Residues D214, E241, and E269 each coordinate Mg(2+). Catalysis depends on H319, which acts as the Proton acceptor. E339 is a substrate binding site.

The protein belongs to the mandelate racemase/muconate lactonizing enzyme family. RhamD subfamily. In terms of assembly, homooctamer; tetramer of dimers. The cofactor is Mg(2+).

The catalysed reaction is L-rhamnonate = 2-dehydro-3-deoxy-L-rhamnonate + H2O. Functionally, catalyzes the dehydration of L-rhamnonate to 2-keto-3-deoxy-L-rhamnonate (KDR). The polypeptide is L-rhamnonate dehydratase (Azorhizobium caulinodans (strain ATCC 43989 / DSM 5975 / JCM 20966 / LMG 6465 / NBRC 14845 / NCIMB 13405 / ORS 571)).